The chain runs to 334 residues: Aspartate carbamoyltransferase catalytic subunit (334 aa).

Residues arginine 71 and threonine 72 each coordinate carbamoyl phosphate. Lysine 99 is an L-aspartate binding site. Positions 121, 151, and 154 each coordinate carbamoyl phosphate. L-aspartate contacts are provided by arginine 184 and arginine 239. Carbamoyl phosphate-binding residues include glycine 280 and proline 281.

Belongs to the aspartate/ornithine carbamoyltransferase superfamily. ATCase family. As to quaternary structure, heterododecamer (2C3:3R2) of six catalytic PyrB chains organized as two trimers (C3), and six regulatory PyrI chains organized as three dimers (R2).

The catalysed reaction is carbamoyl phosphate + L-aspartate = N-carbamoyl-L-aspartate + phosphate + H(+). It participates in pyrimidine metabolism; UMP biosynthesis via de novo pathway; (S)-dihydroorotate from bicarbonate: step 2/3. Functionally, catalyzes the condensation of carbamoyl phosphate and aspartate to form carbamoyl aspartate and inorganic phosphate, the committed step in the de novo pyrimidine nucleotide biosynthesis pathway. This chain is Aspartate carbamoyltransferase catalytic subunit, found in Pseudomonas putida (strain GB-1).